Here is a 466-residue protein sequence, read N- to C-terminus: Glutamate--tRNA ligase 1 (466 aa).

Residues 10-20 (PSPTGLIHLGN) carry the 'HIGH' region motif. C103, C105, C130, and H132 together coordinate Zn(2+). The 'KMSKS' region motif lies at 247–251 (PLSKR). K250 lines the ATP pocket.

It belongs to the class-I aminoacyl-tRNA synthetase family. Glutamate--tRNA ligase type 1 subfamily. As to quaternary structure, monomer. Zn(2+) serves as cofactor.

The protein resides in the cytoplasm. The catalysed reaction is tRNA(Glu) + L-glutamate + ATP = L-glutamyl-tRNA(Glu) + AMP + diphosphate. Functionally, catalyzes the attachment of glutamate to tRNA(Glu) in a two-step reaction: glutamate is first activated by ATP to form Glu-AMP and then transferred to the acceptor end of tRNA(Glu). The sequence is that of Glutamate--tRNA ligase 1 from Methylococcus capsulatus (strain ATCC 33009 / NCIMB 11132 / Bath).